Here is a 455-residue protein sequence, read N- to C-terminus: Ribosomal protein uS12 methylthiotransferase RimO (455 aa).

Positions 30 to 140 constitute an MTTase N-terminal domain; that stretch reads PTIGMVSLGC…VLDAVHGAVP (111 aa). [4Fe-4S] cluster is bound by residues Cys39, Cys75, Cys104, Cys171, Cys175, and Cys178. The 230-residue stretch at 157–386 folds into the Radical SAM core domain; that stretch reads LTPRHFSYLK…MEKAQAISEA (230 aa). The TRAM domain maps to 389–455; sequence AAKVGRRIEV…GEYDLWGRPV (67 aa).

Belongs to the methylthiotransferase family. RimO subfamily. Requires [4Fe-4S] cluster as cofactor.

It is found in the cytoplasm. It catalyses the reaction L-aspartate(89)-[ribosomal protein uS12]-hydrogen + (sulfur carrier)-SH + AH2 + 2 S-adenosyl-L-methionine = 3-methylsulfanyl-L-aspartate(89)-[ribosomal protein uS12]-hydrogen + (sulfur carrier)-H + 5'-deoxyadenosine + L-methionine + A + S-adenosyl-L-homocysteine + 2 H(+). In terms of biological role, catalyzes the methylthiolation of an aspartic acid residue of ribosomal protein uS12. The polypeptide is Ribosomal protein uS12 methylthiotransferase RimO (Cereibacter sphaeroides (strain ATCC 17029 / ATH 2.4.9) (Rhodobacter sphaeroides)).